Consider the following 1235-residue polypeptide: Myosin-1 (1235 aa).

Positions 1–34 (MGITKRSKDKAARAERSAGGDKSSSAKPKKATFD) are disordered. The span at 9–19 (DKAARAERSAG) shows a compositional bias: basic and acidic residues. The Myosin motor domain maps to 41 to 715 (IGVSDLTLLS…TLFALEHMRD (675 aa)). An ATP-binding site is contributed by 134-141 (GESGAGKT). Positions 405-487 (SIGILDIYGF…PGIFSAMKDA (83 aa)) are actin-binding. 2 consecutive IQ domains span residues 719–739 (HNMA…RAEA) and 740–765 (AIRI…EGHK). The TH1 domain occupies 773 to 962 (RRRMSILGSR…TVHTQPGEPP (190 aa)). Disordered stretches follow at residues 949–1076 (YKSS…AAKP) and 1135–1235 (APPV…EDDW). A compositionally biased stretch (low complexity) spans 982 to 1046 (KGKLIKPGGP…PGAAATPAAA (65 aa)). Polar residues predominate over residues 1050–1062 (PSHTRQQSSTSTV). The segment covering 1063–1073 (RPPPPPPPAPA) has biased composition (pro residues). The SH3 domain occupies 1075–1134 (KPKIMAKVLYDFAGTRENELSIKAGDMIEIVQKENNGWWLAKTPEGQAWVPAAYVEEQAP). Residues 1135–1150 (APPVVAPRPPPPPPPA) are compositionally biased toward pro residues. The segment covering 1180–1210 (SLQNRDSGMSLNGANGSGSDASRSSTPTPSI) has biased composition (polar residues).

The protein belongs to the TRAFAC class myosin-kinesin ATPase superfamily. Myosin family.

It localises to the cytoplasm. The protein localises to the cytoskeleton. Its subcellular location is the actin patch. In terms of biological role, type-I myosin implicated in the organization of the actin cytoskeleton. Required for proper actin cytoskeleton polarization. At the cell cortex, assembles in patch-like structures together with proteins from the actin-polymerizing machinery and promotes actin assembly. Functions as actin nucleation-promoting factor (NPF) for the Arp2/3 complex. This is Myosin-1 (myo-1) from Neurospora crassa (strain ATCC 24698 / 74-OR23-1A / CBS 708.71 / DSM 1257 / FGSC 987).